We begin with the raw amino-acid sequence, 333 residues long: Nucleoid-associated protein VV1_3120 (333 aa).

It belongs to the YejK family.

It is found in the cytoplasm. Its subcellular location is the nucleoid. This chain is Nucleoid-associated protein VV1_3120, found in Vibrio vulnificus (strain CMCP6).